The primary structure comprises 556 residues: MSTQATGPSSTSGRRSNSTVRRGPPPSKKPVQSENGSVNGNTSKPNSPPPQPQSQAPSNGERTVKKLRLSKALTIPEGTTVFDACRRMAARRVDACLLTDSSALLSGIVTDKDVATRVIAEGLRPDQTLVSKVMTRNPIFVTSDSLALEALQKMVQGKFRHLPVVENGEVIALLDITKCLYDAISRMEKAAEQGSALAAAVEGVEKQWGSGYSAPYAFIETLRERMFKPALSTIITDNSKVALVAPSDPVSVAAKRMRDLRVNSVIISTGNKISGILTSKDILMRVVAQNLSPELTLVEKVMTPNPECASLETTILDALHTMHDGKFLHLPIIDKDGSAAACVDVLQITHAAISMVENSSGAVNDMANTMMQKFWDSALALEPPDDSDTQSEMSAMMHHSDIGKLSSYPSLGLGNSFSFKFEDLKGRVHRFTSGAENLEELMGIVMQRIGSDNNNVEQRPQIIYEDDEGDKVLITSDSDLVGAVTLARSTGQKVLRLHLDFTESTRSLSSETTQLKKGDSRDRGSGWVSWRGGVVVTGAVVLTSIAIVVYLKRSKN.

2 stretches are compositionally biased toward polar residues: residues 1-20 (MSTQ…NSTV) and 30-44 (PVQS…NTSK). Positions 1-63 (MSTQATGPSS…SQAPSNGERT (63 aa)) are disordered. At Ser2 the chain carries N-acetylserine. CBS domains follow at residues 68-127 (RLSK…RPDQ), 134-189 (MTRN…RMEK), 235-294 (ITDN…LSPE), and 302-360 (MTPN…ENSS). In terms of domain architecture, PB1 spans 414-502 (GNSFSFKFED…KVLRLHLDFT (89 aa)). A helical transmembrane segment spans residues 527-549 (WVSWRGGVVVTGAVVLTSIAIVV).

The protein localises to the membrane. This Arabidopsis thaliana (Mouse-ear cress) protein is CBS domain-containing protein CBSCBSPB3 (CBSCBSPB3).